Here is a 299-residue protein sequence, read N- to C-terminus: MEHFDASLSTYFKALLGPRDTRVKGWFLLDNYIPTFICSVIYLLIVWLGPKYMRNKQPFSCRGILVVYNLGLTLLSLYMFCELVTGVWEGKYNFFCQGTRTAGESDMKIIRVLWWYYFSKLIEFMDTFFFILRKNNHQITVLHVYHHASMLNIWWFVMNWVPCGHSYFGATLNSFIHVLMYSYYGLSSVPSMRPYLWWKKYITQGQLLQFVLTIIQTSCGVIWPCTFPLGWLYFQIGYMISLIALFTNFYIQTYNKKGASRRKDHLKDHQNGSMAAVNGHTNSFSPLENNVKPRKLRKD.

N-acetylmethionine is present on Met1. A run of 7 helical transmembrane segments spans residues 26-46 (WFLLDNYIPTFICSVIYLLIV), 64-84 (ILVVYNLGLTLLSLYMFCELV), 112-132 (VLWWYYFSKLIEFMDTFFFIL), 139-158 (ITVLHVYHHASMLNIWWFVM), 168-187 (FGATLNSFIHVLMYSYYGLS), 205-225 (GQLLQFVLTIIQTSCGVIWPC), and 226-246 (TFPLGWLYFQIGYMISLIALF). The segment at 274 to 299 (MAAVNGHTNSFSPLENNVKPRKLRKD) is disordered. The span at 279-288 (GHTNSFSPLE) shows a compositional bias: polar residues. Residue Ser285 is modified to Phosphoserine.

It belongs to the ELO family. ELOVL5 subfamily. In terms of assembly, interacts with TECR. As to expression, ubiquitous. Highly expressed in the adrenal gland and testis. Weakly expressed in prostate, lung and brain. Expressed in the cerebellum.

It is found in the endoplasmic reticulum membrane. Its subcellular location is the cell projection. It localises to the dendrite. It catalyses the reaction a very-long-chain acyl-CoA + malonyl-CoA + H(+) = a very-long-chain 3-oxoacyl-CoA + CO2 + CoA. The catalysed reaction is (6Z,9Z,12Z)-octadecatrienoyl-CoA + malonyl-CoA + H(+) = (8Z,11Z,14Z)-3-oxoeicosatrienoyl-CoA + CO2 + CoA. It carries out the reaction (9Z,12Z,15Z)-octadecatrienoyl-CoA + malonyl-CoA + H(+) = (11Z,14Z,17Z)-3-oxoeicosatrienoyl-CoA + CO2 + CoA. The enzyme catalyses (9Z)-hexadecenoyl-CoA + malonyl-CoA + H(+) = 3-oxo-(11Z)-octadecenoyl-CoA + CO2 + CoA. It catalyses the reaction (9Z)-octadecenoyl-CoA + malonyl-CoA + H(+) = 3-oxo-(11Z)-eicosenoyl-CoA + CO2 + CoA. The catalysed reaction is (11Z)-octadecenoyl-CoA + malonyl-CoA + H(+) = 3-oxo-(13Z)-eicosenoyl-CoA + CO2 + CoA. It carries out the reaction (9Z,12Z)-octadecadienoyl-CoA + malonyl-CoA + H(+) = (11Z,14Z)-3-oxoicosa-11,14-dienoyl-CoA + CO2 + CoA. The enzyme catalyses (6Z,9Z,12Z,15Z)-octadecatetraenoyl-CoA + malonyl-CoA + H(+) = (8Z,11Z,14Z,17Z)-3-oxoicosatetraenoyl-CoA + CO2 + CoA. It catalyses the reaction (5Z,8Z,11Z,14Z)-eicosatetraenoyl-CoA + malonyl-CoA + H(+) = (7Z,10Z,13Z,16Z)-3-oxodocosatetraenoyl-CoA + CO2 + CoA. The catalysed reaction is (5Z,8Z,11Z,14Z,17Z)-eicosapentaenoyl-CoA + malonyl-CoA + H(+) = 3-oxo-(7Z,10Z,13Z,16Z,19Z)-docosapentaenoyl-CoA + CO2 + CoA. It participates in lipid metabolism; polyunsaturated fatty acid biosynthesis. Catalyzes the first and rate-limiting reaction of the four reactions that constitute the long-chain fatty acids elongation cycle. This endoplasmic reticulum-bound enzymatic process allows the addition of 2 carbons to the chain of long- and very long-chain fatty acids (VLCFAs) per cycle. Condensing enzyme that acts specifically toward polyunsaturated acyl-CoA with the higher activity toward C18:3(n-6) acyl-CoA. May participate in the production of monounsaturated and of polyunsaturated VLCFAs of different chain lengths that are involved in multiple biological processes as precursors of membrane lipids and lipid mediators. In conditions where the essential linoleic and alpha linoleic fatty acids are lacking it is also involved in the synthesis of Mead acid from oleic acid. The protein is Very long chain fatty acid elongase 5 of Homo sapiens (Human).